The following is a 308-amino-acid chain: Phosphoribosylaminoimidazole-succinocarboxamide synthase (308 aa).

The protein belongs to the SAICAR synthetase family.

It catalyses the reaction 5-amino-1-(5-phospho-D-ribosyl)imidazole-4-carboxylate + L-aspartate + ATP = (2S)-2-[5-amino-1-(5-phospho-beta-D-ribosyl)imidazole-4-carboxamido]succinate + ADP + phosphate + 2 H(+). It functions in the pathway purine metabolism; IMP biosynthesis via de novo pathway; 5-amino-1-(5-phospho-D-ribosyl)imidazole-4-carboxamide from 5-amino-1-(5-phospho-D-ribosyl)imidazole-4-carboxylate: step 1/2. The protein is Phosphoribosylaminoimidazole-succinocarboxamide synthase of Xanthomonas oryzae pv. oryzae (strain PXO99A).